Reading from the N-terminus, the 181-residue chain is Adenine phosphoribosyltransferase (181 aa).

It belongs to the purine/pyrimidine phosphoribosyltransferase family. In terms of assembly, homodimer.

The protein resides in the cytoplasm. The enzyme catalyses AMP + diphosphate = 5-phospho-alpha-D-ribose 1-diphosphate + adenine. Its pathway is purine metabolism; AMP biosynthesis via salvage pathway; AMP from adenine: step 1/1. Catalyzes a salvage reaction resulting in the formation of AMP, that is energically less costly than de novo synthesis. The protein is Adenine phosphoribosyltransferase of Chelativorans sp. (strain BNC1).